Here is a 398-residue protein sequence, read N- to C-terminus: Argininosuccinate synthase (398 aa).

8–16 (AYSGGLDTS) is a binding site for ATP. Tyr-87 contacts L-citrulline. Gly-117 contacts ATP. L-aspartate-binding residues include Thr-119, Asn-123, and Asp-124. Asn-123 serves as a coordination point for L-citrulline. Arg-127, Ser-175, Glu-260, and Tyr-272 together coordinate L-citrulline.

It belongs to the argininosuccinate synthase family. Type 1 subfamily. As to quaternary structure, homotetramer.

The protein localises to the cytoplasm. The catalysed reaction is L-citrulline + L-aspartate + ATP = 2-(N(omega)-L-arginino)succinate + AMP + diphosphate + H(+). It participates in amino-acid biosynthesis; L-arginine biosynthesis; L-arginine from L-ornithine and carbamoyl phosphate: step 2/3. The chain is Argininosuccinate synthase from Mycobacterium avium (strain 104).